The primary structure comprises 371 residues: Probable trehalose-phosphate phosphatase 1 (371 aa).

The protein belongs to the trehalose phosphatase family. It depends on a divalent metal cation as a cofactor. As to expression, expressed in roots and shoots.

The enzyme catalyses alpha,alpha-trehalose 6-phosphate + H2O = alpha,alpha-trehalose + phosphate. Its pathway is glycan biosynthesis; trehalose biosynthesis. Functionally, removes the phosphate from trehalose 6-phosphate to produce free trehalose. Trehalose accumulation in plant improves abiotic stress tolerance. The protein is Probable trehalose-phosphate phosphatase 1 (TPP1) of Oryza sativa subsp. japonica (Rice).